We begin with the raw amino-acid sequence, 510 residues long: Serine/threonine-protein kinase UL13 homolog (510 aa).

The disordered stretch occupies residues 1-63 (MDADDTPPNL…WANPSTATCM (63 aa)). Residues 132-458 (RDRPRFAGRG…RRIFQCHAVR (327 aa)) enclose the Protein kinase domain. ATP is bound by residues 138-146 (AGRGTYGRV) and Lys-157. The active-site Proton acceptor is the Asp-257.

The protein belongs to the protein kinase superfamily. Ser/Thr protein kinase family. In terms of processing, autophosphorylated.

The protein localises to the virion tegument. It localises to the host nucleus. The enzyme catalyses L-seryl-[protein] + ATP = O-phospho-L-seryl-[protein] + ADP + H(+). The catalysed reaction is L-threonyl-[protein] + ATP = O-phospho-L-threonyl-[protein] + ADP + H(+). Its function is as follows. Multifunctional serine/threonine kinase that plays a role in several processes including egress of virus particles from the nucleus, modulation of the actin cytoskeleton and regulation of viral and cellular gene expression. Regulates the nuclear localization of viral envelopment factor proteins 24 and 27, by phosphorylating the protein kinase ORF66, indicating a role in nuclear egress. Disrupts host nuclear lamins, including LMNA and LMNB1. Phosphorylates the viral Fc receptor composed of glycoproteins E (gE) and I (gI). Phosphorylation of glycoprotein E (gE) by UL13 alters its subcellular localization, from the host early endosome to the plasma membrane. Participates in the transcriptional regulation of cellular and viral mRNAs mainly by phosphorylating the viral transcriptional regulator IE63. In Varicella-zoster virus (strain Dumas) (HHV-3), this protein is Serine/threonine-protein kinase UL13 homolog.